A 272-amino-acid polypeptide reads, in one-letter code: METYAVFGNPIAHSKSPFIHQQFAQQLDIVHPYGRVLAPINNFINTLDAFFAAGGKGANITVPFKEEAFARSDELTERASLAGAVNTLKRLEDGRLLGDNTDGIGLLSDLKRLNFIRPGWRILLIGAGGASRGVLLPLLSLDCAVTITNRTASRAEALAKIFAHTGSVHATDMDKLDGCEFDLIVNATSSGIRGEIPAIPASLIHPSLCCYDMFYQKGNTPFLSWCVQQGAKRYADGLGMLVGQAAHAVLLWHGVLPQVEPVIKLLQQELLA.

Residues 14–16 and Thr61 each bind shikimate; that span reads SKS. Catalysis depends on Lys65, which acts as the Proton acceptor. Glu77 contributes to the NADP(+) binding site. Positions 86 and 102 each coordinate shikimate. NADP(+) contacts are provided by residues 126-130, 149-154, and Met213; these read GAGGA and NRTASR. Tyr215 serves as a coordination point for shikimate. An NADP(+)-binding site is contributed by Gly237.

This sequence belongs to the shikimate dehydrogenase family. Homodimer.

The enzyme catalyses shikimate + NADP(+) = 3-dehydroshikimate + NADPH + H(+). It functions in the pathway metabolic intermediate biosynthesis; chorismate biosynthesis; chorismate from D-erythrose 4-phosphate and phosphoenolpyruvate: step 4/7. Functionally, involved in the biosynthesis of the chorismate, which leads to the biosynthesis of aromatic amino acids. Catalyzes the reversible NADPH linked reduction of 3-dehydroshikimate (DHSA) to yield shikimate (SA). The sequence is that of Shikimate dehydrogenase (NADP(+)) from Salmonella choleraesuis (strain SC-B67).